The primary structure comprises 477 residues: Bifunctional protein HldE (477 aa).

A ribokinase region spans residues 1–318 (MKVTLPEFER…ENAVRGRADT (318 aa)). Lysine 179 is subject to N6-acetyllysine. ATP is bound at residue 195–198 (NLSE). Residue aspartate 264 is part of the active site. Residues 344 to 477 (MTNGVFDILH…IKKIQLDKKG (134 aa)) form a cytidylyltransferase region.

The protein in the N-terminal section; belongs to the carbohydrate kinase PfkB family. This sequence in the C-terminal section; belongs to the cytidylyltransferase family. Homodimer.

The catalysed reaction is D-glycero-beta-D-manno-heptose 7-phosphate + ATP = D-glycero-beta-D-manno-heptose 1,7-bisphosphate + ADP + H(+). The enzyme catalyses D-glycero-beta-D-manno-heptose 1-phosphate + ATP + H(+) = ADP-D-glycero-beta-D-manno-heptose + diphosphate. The protein operates within nucleotide-sugar biosynthesis; ADP-L-glycero-beta-D-manno-heptose biosynthesis; ADP-L-glycero-beta-D-manno-heptose from D-glycero-beta-D-manno-heptose 7-phosphate: step 1/4. It functions in the pathway nucleotide-sugar biosynthesis; ADP-L-glycero-beta-D-manno-heptose biosynthesis; ADP-L-glycero-beta-D-manno-heptose from D-glycero-beta-D-manno-heptose 7-phosphate: step 3/4. In terms of biological role, catalyzes the phosphorylation of D-glycero-D-manno-heptose 7-phosphate at the C-1 position to selectively form D-glycero-beta-D-manno-heptose-1,7-bisphosphate. Catalyzes the ADP transfer from ATP to D-glycero-beta-D-manno-heptose 1-phosphate, yielding ADP-D-glycero-beta-D-manno-heptose. This Escherichia coli O81 (strain ED1a) protein is Bifunctional protein HldE.